The chain runs to 760 residues: Xaa-Pro dipeptidyl-peptidase (760 aa).

Residues serine 349, aspartate 469, and histidine 499 each act as charge relay system in the active site.

This sequence belongs to the peptidase S15 family. Homodimer.

The protein resides in the cytoplasm. It carries out the reaction Hydrolyzes Xaa-Pro-|- bonds to release unblocked, N-terminal dipeptides from substrates including Ala-Pro-|-p-nitroanilide and (sequentially) Tyr-Pro-|-Phe-Pro-|-Gly-Pro-|-Ile.. In terms of biological role, removes N-terminal dipeptides sequentially from polypeptides having unsubstituted N-termini provided that the penultimate residue is proline. The polypeptide is Xaa-Pro dipeptidyl-peptidase (Streptococcus pyogenes serotype M1).